The sequence spans 264 residues: MALYFIGLGLYDERDITLKGLKTARKCDKIFAEFYTSLLAGTTMERIEGLIGKPIIRLSREDVELNFEKIVLPEAKEKDVAFLTAGDPMVATTHSDLRIRAKKAGVESYVIHAPSIYSAVAVTGLQIYKFGKSATVAYPERNWFPTSYYDVIKENRERGLHTLLFLDIKAEQNRYMTANEAMEILLQVEDMKKEGIFTPETLVVVLARAGSLNPTIRAGYVKDMIHEDFGRQPHVLIVPGRLHVVEAEYLVEFAGAPEEILEEV.

S-adenosyl-L-methionine-binding positions include L10, D87, V90, 115–116, L166, A209, and H234; that span reads SI.

Belongs to the diphthine synthase family. In terms of assembly, homodimer.

The enzyme catalyses 2-[(3S)-amino-3-carboxypropyl]-L-histidyl-[translation elongation factor 2] + 3 S-adenosyl-L-methionine = diphthine-[translation elongation factor 2] + 3 S-adenosyl-L-homocysteine + 3 H(+). Its pathway is protein modification; peptidyl-diphthamide biosynthesis. In terms of biological role, S-adenosyl-L-methionine-dependent methyltransferase that catalyzes the trimethylation of the amino group of the modified target histidine residue in translation elongation factor 2 (EF-2), to form an intermediate called diphthine. The three successive methylation reactions represent the second step of diphthamide biosynthesis. In Thermococcus gammatolerans (strain DSM 15229 / JCM 11827 / EJ3), this protein is Diphthine synthase.